A 104-amino-acid polypeptide reads, in one-letter code: L-rhamnose mutarotase (104 aa).

Tyr18 serves as a coordination point for substrate. His22 serves as the catalytic Proton donor. Substrate contacts are provided by residues Tyr41 and 76 to 77 (WW).

The protein belongs to the rhamnose mutarotase family. As to quaternary structure, homodimer.

The protein resides in the cytoplasm. It carries out the reaction alpha-L-rhamnose = beta-L-rhamnose. Its pathway is carbohydrate metabolism; L-rhamnose metabolism. Functionally, involved in the anomeric conversion of L-rhamnose. In Tolumonas auensis (strain DSM 9187 / NBRC 110442 / TA 4), this protein is L-rhamnose mutarotase.